Consider the following 401-residue polypeptide: ATP phosphoribosyltransferase regulatory subunit (401 aa).

It belongs to the class-II aminoacyl-tRNA synthetase family. HisZ subfamily. As to quaternary structure, heteromultimer composed of HisG and HisZ subunits.

Its subcellular location is the cytoplasm. It functions in the pathway amino-acid biosynthesis; L-histidine biosynthesis; L-histidine from 5-phospho-alpha-D-ribose 1-diphosphate: step 1/9. Required for the first step of histidine biosynthesis. May allow the feedback regulation of ATP phosphoribosyltransferase activity by histidine. The protein is ATP phosphoribosyltransferase regulatory subunit of Desulforamulus reducens (strain ATCC BAA-1160 / DSM 100696 / MI-1) (Desulfotomaculum reducens).